Here is a 236-residue protein sequence, read N- to C-terminus: Phosphoribosylaminoimidazole-succinocarboxamide synthase (236 aa).

It belongs to the SAICAR synthetase family.

It catalyses the reaction 5-amino-1-(5-phospho-D-ribosyl)imidazole-4-carboxylate + L-aspartate + ATP = (2S)-2-[5-amino-1-(5-phospho-beta-D-ribosyl)imidazole-4-carboxamido]succinate + ADP + phosphate + 2 H(+). It functions in the pathway purine metabolism; IMP biosynthesis via de novo pathway; 5-amino-1-(5-phospho-D-ribosyl)imidazole-4-carboxamide from 5-amino-1-(5-phospho-D-ribosyl)imidazole-4-carboxylate: step 1/2. The chain is Phosphoribosylaminoimidazole-succinocarboxamide synthase from Pseudomonas putida (strain W619).